Consider the following 121-residue polypeptide: Large ribosomal subunit protein bL12 (121 aa).

Belongs to the bacterial ribosomal protein bL12 family. As to quaternary structure, homodimer. Part of the ribosomal stalk of the 50S ribosomal subunit. Forms a multimeric L10(L12)X complex, where L10 forms an elongated spine to which 2 to 4 L12 dimers bind in a sequential fashion. Binds GTP-bound translation factors.

Functionally, forms part of the ribosomal stalk which helps the ribosome interact with GTP-bound translation factors. Is thus essential for accurate translation. The chain is Large ribosomal subunit protein bL12 from Shewanella halifaxensis (strain HAW-EB4).